Reading from the N-terminus, the 97-residue chain is Protein 9b (97 aa).

The 9b domain occupies 8–97 (VPPALHLVDP…PDEFVVVTAK (90 aa)).

The protein belongs to the coronavirus group 2 protein 9b family. Homodimer.

Its subcellular location is the host cytoplasmic vesicle membrane. It localises to the host cytoplasm. The protein is Protein 9b of Rhinolophus sinicus (Chinese rufous horseshoe bat).